Reading from the N-terminus, the 2474-residue chain is MDPVYVDIDADSAFLKALQRAYPMFEVEPRQVTPNDHANARAFSHLAIKLIEQEIDPDSTILDIGSAPARRMMSDRKYHCVCPMRSAEDPERLANYARKLASAAGKVLDRNISEKIGDLQAVMAVPDAETPTFCLHTDVSCRQRADVAIYQDVYAVHAPTSLYHQAIKGVRVAYWIGFDTTPFMYNAMAGAYPSYSTNWADEQVLKAKNIGLCSTDLTEGRRGKLSIMRGKKMKPCDRVLFSVGSTLYPESRKLLKSWHLPSVFHLKGKLSFTCRCDTVVSCEGYVVKRITISPGLYGKTTGYAVTHHADGFLMCKTTDTVDGERVSFSVCTYVPATICDQMTGILATEVTPEDAQKLLVGLNQRIVVNGRTQRNTNTMKNYLLPVVAQAFSKWAKECRKDMEDEKLLGIRERTLTCCCLWAFKKQKTHTVYKRPDTQSIQKVPAEFDSFVVPSLWSSGLSIPLRTRIKWLLSKVPKTDLIPYSGDAKEARDAEKEAEEEREAELTREALPPLQAAQDDVQVEIDVEQLEDRAGAGIIETPRGAIKVTAQPTDHVVGEYLVLSPQTVLRSQKLSLIHALAEQVKTCTHSGRAGRYAVEAYDGRILVPSGYAISPEDFQSLSESATMVYNEREFVNRKLHHIALHGPALNTDEESYELVRAERTEHEYVYDVDQRRCCKKEEAAGLVLVGDLTNPPYHEFAYEGLRIRPACPYKTAVIGVFGVPGSGKSAIIKNLVTRQDLVTSGKKENCQEISTDVMRQRNLEISARTVDSLLLNGCNRPVDVLYVDEAFACHSGTLLALIALVRPRQKVVLCGDPKQCGFFNMMQMKVNYNHNICTQVYHKSISRRCTLPVTAIVSSLHYEGKMRTTNEYNKPIVVDTTGSTKPDPGDLVLTCFRGWVKQLQIDYRGHEVMTAAASQGLTRKGVYAVRQKVNENPLYASTSEHVNVLLTRTEGKLVWKTLSGDPWIKTLQNPPKGNFKATIKEWEVEHASIMAGICNHQVTFDTFQNKANVCWAKSLVPILETAGIKLNDRQWSQIIQAFKEDRAYSPEVALNEICTRMYGVDLDSGLFSKPLVSVHYADNHWDNRPGGKMFGFNPEAASILERKYPFTKGKWNTNKQICVTTRRIEDFNPNTNIIPANRRLPHSLVAEHRPVKGERMEWLVNKINGHHVLLVSGYNLVLPTKRVTWVAPLGIRGADYTYNLELGLPATLGRYDLVIINIHTPFRIHHYQQCVDHAMKLQMLGGDSLRLLKPGGSLLIRAYGYADRTSERVVCVLGRKFRSSRALKPPCVTSNTEMFFLFSNFDNGRRNFTTHVMNNQLNAAFVGQATRAGCAPSYRVKRMDIAKNDEECVVNAANPRGLPGDGVCKAVYKKWPESFKNSATPVGTAKTVMCGTYPVIHAVGPNFSNYSESEGDRELAAAYREVAKEVTRLGVNSVAIPLLSTGVYSGGKDRLTQSLNHLFTALDSTDADVVIYCRDKEWEKKIAEAIQMRTQVELLDEHISVDCDIIRVHPDSSLAGRKGYSTTEGSLYSYLEGTRFHQTAVDMAEVYTMWPKQTEANEQVCLYALGESIESIRQKCPVDDADASSPPKTVPCLCRYAMTPERVTRLRMNHVTSIIVCSSFPLPKYKIEGVQKVKCSKVMLFDHNVPSRVSPREYKSPQETAQEVSSTTSLTHSQFDLSVDGEELPAPSDLEADAPIPEPTPDDRAVLTLPPTIDNFSAVSDWVMNTAPVAPPRRRRGKNLNVTCDEREGNVLPMASVRFFRADLHSIVQETAEIRDTAASLQAPLSVATEPNQLPISFGAPNETFPITFGDFDEGEIESLSSELLTFGDFSPGEVDDLTDSDWSTCSDTDDELXLDRAGGYIFSSDTGPGHLQQRSVRQTVLPVNTLEEVQEEKCYPPKLDEVKEQLLLKKLQESASMANRSRYQSRKVENMKATIVQRLKGGCKLYLMSETPKVPTYRTTYPAPVYSPPINIRLSNPESAVAACNEFLARNYPTVASYQITDEYDAYLDMVDGSESCLDRATFNPSKLRSYPKQHSYHAPTIRSAVPSPFQNTLQNVLAAATKRNCNVTQMRELPTLDSAVFNVECFKKFACNQEYWKEFAASPIRITTENLTTYVTKLKGPKAAALFAKTHNLLPLQEVPMDRFTVDMKRDVKVTPGTKHTEERPKVQVIQAAEPLATAYLCGIHRELVRRLNAVLLPNVHTLFDMSAEDFDAIIAAHFKPGDAVLETDIASFDKSQDDSLALTALMLLEDLGVDHPLLDLIEAAFGEISSCHLPTGTRFKFGAMMKSGMFLTLFVNTLLNITIASRVLEDRLTRSACAAFIGDDNIIHGVVSDELMAARCATWMNMEVKIIDAVVSQKAPYFCGGFILYDTVAGTACRVADPLKRLFKLGKPLAAGDEQDDDRRRALADEVVRWQRTGLTDELEKAVHSRYEVQGISVVVMSMATFASSRSNFEKLRGPVVTLYGGPK.

The 232-residue stretch at 28–259 (EPRQVTPNDH…ESRKLLKSWH (232 aa)) folds into the Alphavirus-like MT domain. The active-site For mRNA-capping enzyme nsP1 activity is the His-37. Residues His-79, Glu-129, Cys-134, and Cys-141 each coordinate Zn(2+). The tract at residues 295 to 450 (GLYGKTTGYA…QKVPAEFDSF (156 aa)) is membrane-binding and oligomerization. S-palmitoyl cysteine; by host attachment occurs at residues Cys-417 and Cys-419. The (+)RNA virus helicase ATP-binding domain maps to 690–842 (DLTNPPYHEF…HNICTQVYHK (153 aa)). 721-728 (GVPGSGKS) contributes to the a ribonucleoside 5'-triphosphate binding site. The (+)RNA virus helicase C-terminal domain maps to 843 to 991 (SISRRCTLPV…IKEWEVEHAS (149 aa)). The 324-residue stretch at 1004–1327 (DTFQNKANVC…NQLNAAFVGQ (324 aa)) folds into the Peptidase C9 domain. The tract at residues 1005 to 1024 (TFQNKANVCWAKSLVPILET) is nucleolus localization signal. Catalysis depends on Cys-1013, which acts as the For cysteine protease nsP2 activity. The Nuclear export signal signature appears at 1058–1067 (TRMYGVDLDS). His-1083 serves as the catalytic For cysteine protease nsP2 activity. Positions 1182–1186 (PTKRV) match the Nuclear localization signal motif. The Macro domain maps to 1334–1493 (APSYRVKRMD…KIAEAIQMRT (160 aa)). Positions 1343, 1357, 1365, 1445, 1446, and 1447 each coordinate ADP-D-ribose. Zn(2+) contacts are provided by Cys-1595, Cys-1597, Cys-1620, and Cys-1638. The tract at residues 1651-1706 (RVSPREYKSPQETAQEVSSTTSLTHSQFDLSVDGEELPAPSDLEADAPIPEPTPDD) is disordered. Residues 1659–1857 (SPQETAQEVS…TCSDTDDELX (199 aa)) are HVD. Over residues 1660 to 1679 (PQETAQEVSSTTSLTHSQFD) the composition is skewed to polar residues. Interaction with host CD2AP stretches follow at residues 1726–1739 (VMNT…RRRR) and 1756–1767 (PMASVRFFRADL). An interaction with host FHL1 region spans residues 1745–1793 (VTCDEREGNVLPMASVRFFRADLHSIVQETAEIRDTAASLQAPLSVATE). An FGDF; binding to host G3BP1 motif is present at residues 1812-1815 (FGDF). Residues 1820–1828 (IESLSSELL) form an interaction with host CD2AP region. The short motif at 1830 to 1833 (FGDF) is the FGDF; binding to host G3BP1 element. In terms of domain architecture, RdRp catalytic spans 2228-2343 (DAVLETDIAS…HGVVSDELMA (116 aa)).

In terms of assembly, homododecamer. The enzyme forms a membrane-associated dodecameric ring with a central channel for the exchange of between the viral replication factories and the host cytoplasm. Interacts with non-structural protein 3. Interacts with RNA-directed RNA polymerase nsP4. Interacts with protease nsP2. Interacts with itself. Interacts with host STING1; this interaction results in inhibition of cGAS-STING signaling and increased levels of palmitoylation and protein stabilization of nsP1. Interacts with host TMEM45B; this interaction leads to viral replication inhibition. As to quaternary structure, interacts with mRNA-capping enzyme nsP1. Interacts (via C-terminus) with host G3BP1; this interaction inhibits the formation of host stress granules on viral mRNAs and the nsp3-G3BP1 complexes bind viral RNAs and probably orchestrate the assembly of viral replication complexes. Interacts (via C-terminus) with host G3BP2; this interaction inhibits the formation of host stress granules on viral mRNAs and the nsp3-G3BP2 complexes bind viral RNAs and probably orchestrate the assembly of viral replication complexes. Interacts (via C-terminus) with host NAP1L1. Interacts (via C-terminus) with host NAP1L4. Interacts (via C-terminus) with host DHX9; this interaction allows the recruitment of DHX9 to the plasma membrane, where it associates with viral replication complexes and may play a role in the translation-to-replication switch. Interacts (via C-terminus) with host FHL1 (via LIM domain 1); this interaction is required for viral RNA replication. Interacts (via C-terminus) with host CD2AP; this interaction plays a role in initiation of viral replication. Interacts (via C-terminus) with host SH3KBP1; this interaction plays a role in initiation of viral replication. Interacts with mRNA-capping enzyme nsP1. Interacts with protease nsP2. interacts with itself. Interacts with host TMEM45B; this interaction leads to viral replication inhibition. In terms of assembly, interacts with RNA-directed RNA polymerase nsP4. Interacts with mRNA-capping enzyme nsP1. Interacts with KPNA1/karyopherin-alpha1; this interaction probably allows the active transport of protease nsP2 into the host nucleus. Mg(2+) is required as a cofactor. The cofactor is Mn(2+). Post-translationally, specific enzymatic cleavages in vivo yield mature proteins. The processing of the polyprotein is temporally regulated. In early stages (1.7 hpi), P1234 is first cleaved in trans through its nsP2 protease activity, releasing P123' and nsP4, which associate to form the early replication complex. At the same time, P1234 is also cut at the nsP1/nsP2 site early in infection but with lower efficiency. After replication of the viral minus-strand RNAs (4 hpi), the polyproteins are cut at the nsP1/nsP2 and nsP2/nsP3 sites very efficiently, preventing accumulation of P123' and P1234 and allowing the formation of the late replication complex. NsP3'/nsP4 site is not cleaved anymore and P34 is produced rather than nsP4. In terms of processing, specific enzymatic cleavages in vivo yield mature proteins. The processing of the polyprotein is temporally regulated. In early stages (1.7 hpi), P123 is cleaved at the nsP1/nsP2 site with low efficiency. After replication of the viral minus-strand RNAs (4 hpi), the polyproteins are cut at the nsP1/nsP2 and nsP2/nsP3 sites very efficiently, preventing accumulation of P123 and allowing the formation of the late replication complex. Specific enzymatic cleavages in vivo yield mature proteins. The processing of the polyprotein is temporally regulated. In early stages (1.7 hpi), P123' is cleaved at the nsP1/nsP2 site with low efficiency. After replication of the viral minus-strand RNAs (4 hpi), the polyproteins are cut at the nsP1/nsP2 and nsP2/nsP3 sites very efficiently, preventing accumulation of P123' and allowing the formation of the late replication complex. Post-translationally, palmitoylated by host palmitoyltransferases ZDHHC2 and ZDHHC19. Palmitoylation is increased by the interacton with host STING1. In terms of processing, phosphorylated by host on serines and threonines. Ubiquitinated; targets the protein for rapid degradation via the ubiquitin system. Nsp4 is present in extremely low quantities due to low frequency of translation through the amber stop-codon and the degradation by the ubiquitin pathway.

The protein localises to the host cytoplasmic vesicle membrane. It is found in the host cell membrane. Its subcellular location is the host cell projection. The protein resides in the host filopodium. It localises to the host nucleus. The protein localises to the host cytoplasm. It catalyses the reaction GTP + S-adenosyl-L-methionine = N(7)-methyl-GTP + S-adenosyl-L-homocysteine. It carries out the reaction N(7)-methyl-GTP + L-histidyl-[protein] = N(tele)-(N(7)-methylguanosine 5'-phospho)-L-histidyl-[protein] + diphosphate. The catalysed reaction is N(tele)-(N(7)-methylguanosine 5'-phospho)-L-histidyl-[protein] + a 5'-end diphospho-(purine-ribonucleoside) in mRNA + H(+) = a 5'-end (N(7)-methyl 5'-triphosphoguanosine)-(purine-ribonucleoside) in mRNA + L-histidyl-[protein]. The enzyme catalyses a 5'-end triphospho-ribonucleoside in mRNA + H2O = a 5'-end diphospho-ribonucleoside in mRNA + phosphate + H(+). It catalyses the reaction a ribonucleoside 5'-triphosphate + H2O = a ribonucleoside 5'-diphosphate + phosphate + H(+). It carries out the reaction ATP + H2O = ADP + phosphate + H(+). The catalysed reaction is RNA(n) + a ribonucleoside 5'-triphosphate = RNA(n+1) + diphosphate. The enzyme catalyses 4-O-(ADP-D-ribosyl)-L-aspartyl-[protein] + H2O = L-aspartyl-[protein] + ADP-D-ribose + H(+). It catalyses the reaction 5-O-(ADP-D-ribosyl)-L-glutamyl-[protein] + H2O = L-glutamyl-[protein] + ADP-D-ribose + H(+). It carries out the reaction RNA(n) + ATP = RNA(n)-3'-adenine ribonucleotide + diphosphate. The catalysed reaction is ADP-alpha-D-ribose 1''-phosphate + H2O = ADP-D-ribose + phosphate. In terms of biological role, inactive precursor of the viral replicase, which is activated by cleavages carried out by the viral protease nsP2. Its function is as follows. The early replication complex formed by the polyprotein P123 and nsP4 synthesizes minus-strand RNAs. As soon P123 is cleaved into mature proteins, the plus-strand RNAs synthesis begins. The early replication complex formed by the polyprotein P123' and nsP4 synthesizes minus-strand RNAs. Polyprotein P123' is a short-lived polyprotein that accumulates during early stage of infection. As soon P123' is cleaved into mature proteins, the plus-strand RNAs synthesis begins. Functionally, cytoplasmic capping enzyme that catalyzes two virus-specific reactions: methyltransferase and guanylyltransferase. mRNA-capping is necessary since all viral RNAs are synthesized in the cytoplasm, and host capping enzymes are restricted to the nucleus. The enzymatic reaction involves a covalent link between 7-methyl-GMP and nsP1, whereas eukaryotic capping enzymes form a covalent complex only with GMP. nsP1 capping consists in the following reactions: GTP is first methylated into 7-methyl-GMP and then is covalently linked to nsP1 to form the m7GMp-nsP1 complex from which 7-methyl-GMP complex is transferred to the mRNA to create the cap structure. NsP1 is also needed for the initiation of the minus-strand RNAs synthesis. At the initiation of virus replication, mediates the assembly of the viral replication complex made of the non-structural proteins, the association of this complex with the inner face of the plasma membrane and the formation of membranous spherules that serve as replication complex factories. Forms the neck of these spherules with a central channel for mediating communication and the passage of RNA, nucleotides, and small proteins between the viral replication complex and the host cytoplasm. Palmitoylated nsP1 is remodeling host cell cytoskeleton, and induces filopodium-like structure formation at the surface of the host cell. In terms of biological role, multifunctional protein whose N-terminus is part of the RNA polymerase complex and displays NTPase, RNA triphosphatase and helicase activities. NTPase and RNA triphosphatase are involved in viral RNA capping and helicase keeps a check on the dsRNA replication intermediates. The C-terminus harbors a protease that specifically cleaves the polyproteins and releases the mature proteins. Required for the shutoff of minus-strand RNAs synthesis. Specifically inhibits the host IFN response by promoting the nuclear export of host STAT1. Also inhibits host transcription by inducing the rapid proteasome-dependent degradation of POLR2A, a catalytic subunit of the RNAPII complex. The resulting inhibition of cellular protein synthesis serves to ensure maximal viral gene expression and to evade host immune response. Its function is as follows. Seems to be essential for minus-strand RNAs and subgenomic 26S mRNAs synthesis. Displays mono-ADP-ribosylhydrolase activity. ADP-ribosylation is a post-translational modification that controls various processes of the host cell and the virus probably needs to revert it for optimal viral replication. Binds proteins of FXR family and sequesters them into the viral RNA replication complexes thereby inhibiting the formation of host stress granules on viral mRNAs. The nsp3'-FXR complexes bind viral RNAs and probably orchestrate the assembly of viral replication complexes, thanks to the ability of FXR family members to self-assemble and bind DNA. Seems to be essential for minus-strand RNAs and subgenomic 26S mRNAs synthesis. Displays mono-ADP-ribosylhydrolase activity. ADP-ribosylation is a post-translational modification that controls various processes of the host cell and the virus probably needs to revert it for optimal viral replication. Binds proteins of G3BP family and sequesters them into the viral RNA replication complexes thereby inhibiting the formation of host stress granules on viral mRNAs. The nsp3-G3BP complexes bind viral RNAs and probably orchestrate the assembly of viral replication complexes, thanks to the ability of G3BP family members to self-assemble and bind DNA. Functionally, RNA dependent RNA polymerase. Replicates genomic and antigenomic RNA by recognizing replications specific signals. The early replication complex formed by the polyprotein P123 and nsP4 synthesizes minus-strand RNAs. The late replication complex composed of fully processed nsP1-nsP4 is responsible for the production of genomic and subgenomic plus-strand RNAs. The chain is Polyprotein P1234 from Aedes aegypti (Yellowfever mosquito).